The following is a 271-amino-acid chain: Methyltransferase psoC (271 aa).

This sequence belongs to the methyltransferase superfamily. LaeA methyltransferase family.

The protein operates within secondary metabolite biosynthesis. Methyltransferase; part of the gene cluster that mediates the biosynthesis of pseurotin A, a competitive inhibitor of chitin synthase and an inducer of nerve-cell proliferation. The PKS-NRPS hybrid synthetase psoA is responsible for the biosynthesis of azaspirene, one of the first intermediates having the 1-oxa-7-azaspiro[4,4]-non-2-ene-4,6-dione core of pseurotin, via condensation of one acetyl-CoA, 4 malonyl-CoA, and a L-phenylalanine molecule. The dual-functional monooxygenase/methyltransferase psoF seems to be involved in the addition of the C3 methyl group onto the pseurotin scaffold. Azaspirene is then converted to synerazol through 4 steps including oxidation of C17 by the cytochrome P450 monooxygenase psoD, O-methylation of the hydroxy group of C8 by the methyltransferase psoC, and the trans-to-cis isomerization of the C13 olefin by the glutathione S-transferase psoE. The fourth step of synerazol production is performed by the dual-functional monooxygenase/methyltransferase psoF which seems to catalyze the epoxidation of the intermediate deepoxy-synerazol. Synerazol can be attacked by a water molecule nonenzymatically at two different positions to yield two diol products, pseurotin A and pseurotin D. This is Methyltransferase psoC from Aspergillus fumigatus (strain ATCC MYA-4609 / CBS 101355 / FGSC A1100 / Af293) (Neosartorya fumigata).